The primary structure comprises 358 residues: UDP-N-acetylglucosamine--N-acetylmuramyl-(pentapeptide) pyrophosphoryl-undecaprenol N-acetylglucosamine transferase (358 aa).

Residues Ser-197 and Gln-288 each contribute to the UDP-N-acetyl-alpha-D-glucosamine site.

The protein belongs to the glycosyltransferase 28 family. MurG subfamily.

It localises to the cell membrane. The enzyme catalyses Mur2Ac(oyl-L-Ala-gamma-D-Glu-L-Lys-D-Ala-D-Ala)-di-trans,octa-cis-undecaprenyl diphosphate + UDP-N-acetyl-alpha-D-glucosamine = beta-D-GlcNAc-(1-&gt;4)-Mur2Ac(oyl-L-Ala-gamma-D-Glu-L-Lys-D-Ala-D-Ala)-di-trans,octa-cis-undecaprenyl diphosphate + UDP + H(+). The protein operates within cell wall biogenesis; peptidoglycan biosynthesis. Functionally, cell wall formation. Catalyzes the transfer of a GlcNAc subunit on undecaprenyl-pyrophosphoryl-MurNAc-pentapeptide (lipid intermediate I) to form undecaprenyl-pyrophosphoryl-MurNAc-(pentapeptide)GlcNAc (lipid intermediate II). This chain is UDP-N-acetylglucosamine--N-acetylmuramyl-(pentapeptide) pyrophosphoryl-undecaprenol N-acetylglucosamine transferase, found in Streptococcus agalactiae serotype Ia (strain ATCC 27591 / A909 / CDC SS700).